The chain runs to 209 residues: ATP synthase subunit delta (209 aa).

It belongs to the ATPase delta chain family. In terms of assembly, F-type ATPases have 2 components, F(1) - the catalytic core - and F(0) - the membrane proton channel. F(1) has five subunits: alpha(3), beta(3), gamma(1), delta(1), epsilon(1). F(0) has three main subunits: a(1), b(2) and c(10-14). The alpha and beta chains form an alternating ring which encloses part of the gamma chain. F(1) is attached to F(0) by a central stalk formed by the gamma and epsilon chains, while a peripheral stalk is formed by the delta and b chains.

Its subcellular location is the cell inner membrane. Functionally, f(1)F(0) ATP synthase produces ATP from ADP in the presence of a proton or sodium gradient. F-type ATPases consist of two structural domains, F(1) containing the extramembraneous catalytic core and F(0) containing the membrane proton channel, linked together by a central stalk and a peripheral stalk. During catalysis, ATP synthesis in the catalytic domain of F(1) is coupled via a rotary mechanism of the central stalk subunits to proton translocation. Its function is as follows. This protein is part of the stalk that links CF(0) to CF(1). It either transmits conformational changes from CF(0) to CF(1) or is implicated in proton conduction. The chain is ATP synthase subunit delta from Psychrobacter sp. (strain PRwf-1).